The sequence spans 92 residues: Large ribosomal subunit protein bL27 (92 aa).

Residues 1 to 9 constitute a propeptide that is removed on maturation; that stretch reads MLKLNLQFF. The disordered stretch occupies residues 14 to 34; that stretch reads GVGSTKNGRDSQSKRLGAKRA.

Belongs to the bacterial ribosomal protein bL27 family. In terms of processing, the N-terminus is cleaved by ribosomal processing cysteine protease Prp.

The polypeptide is Large ribosomal subunit protein bL27 (Exiguobacterium sibiricum (strain DSM 17290 / CCUG 55495 / CIP 109462 / JCM 13490 / 255-15)).